Consider the following 148-residue polypeptide: Protein F15 (148 aa).

This sequence belongs to the poxviridae F15 protein family.

In Fowlpox virus (strain NVSL) (FPV), this protein is Protein F15.